We begin with the raw amino-acid sequence, 532 residues long: MKFQSFFSSVLIFFTTSTLLLSIPHPVSANRSNQSSFLQCLSLQLNDSNIVSKVIHTPNDTSFSSVLASSIQNQRFSAPDVPKPVLILTPVQPSDVQSAVKCARRFGIHIRTRSGGHDYEGLSYVTHKPFVILDLRNLRSITVDVDNRSVWVQTGATIGELYYEIGKKNRTLAFPAGVCPTVGVGGHFSGGGYGTLLRKHGLAADHVIDARVVDARGRILERREMGEDFFWAIRGGGGSSFCVVLSWKIGLINVPSTVTVFNVTKFSEQSALKIIHRWQFVADKVSDDLFIRVMLQRYKNMVRASFPGLYLGSVKNLLKMVNKEFPELGLEEDDCTEMSWIESVIWFAELGEEPINVLTKRTRASLAFKAKSDFVQEPMPKTAISKLWRRLQEPEAEHAQLIFTPFGGKMSEIADYETPFPHRKGNIYEIQYLNYWRGDVKEKYMRWVERVYDDMSEFVAKSPRGAYINLRDLDLGMYVGVKRSKYEEGKSWGVKYFKNNFERLVRVKTSVDPSDFFCDEQSIPPFTFVEVI.

The signal sequence occupies residues 1-29 (MKFQSFFSSVLIFFTTSTLLLSIPHPVSA). N-linked (GlcNAc...) asparagine glycans are attached at residues Asn30, Asn33, Asn46, Asn59, Asn147, Asn169, and Asn262. Cysteines 40 and 102 form a disulfide. Residues 80 to 254 (DVPKPVLILT…LSWKIGLINV (175 aa)) enclose the FAD-binding PCMH-type domain. Positions 117-179 (HDYEGLSYVT…RTLAFPAGVC (63 aa)) form a cross-link, 6-(S-cysteinyl)-8alpha-(pros-histidyl)-FAD (His-Cys).

This sequence belongs to the oxygen-dependent FAD-linked oxidoreductase family. Requires FAD as cofactor. In terms of processing, the FAD cofactor is bound via a bicovalent 6-S-cysteinyl, 8alpha-N1-histidyl FAD linkage.

The protein resides in the secreted. Its subcellular location is the cell wall. This Arabidopsis thaliana (Mouse-ear cress) protein is Berberine bridge enzyme-like 18.